We begin with the raw amino-acid sequence, 338 residues long: 5-dehydro-2-deoxygluconokinase (338 aa).

It belongs to the carbohydrate kinase PfkB family.

It carries out the reaction 5-dehydro-2-deoxy-D-gluconate + ATP = 6-phospho-5-dehydro-2-deoxy-D-gluconate + ADP + H(+). It participates in polyol metabolism; myo-inositol degradation into acetyl-CoA; acetyl-CoA from myo-inositol: step 5/7. Catalyzes the phosphorylation of 5-dehydro-2-deoxy-D-gluconate (2-deoxy-5-keto-D-gluconate or DKG) to 6-phospho-5-dehydro-2-deoxy-D-gluconate (DKGP). This Mesomycoplasma hyopneumoniae (strain 7448) (Mycoplasma hyopneumoniae) protein is 5-dehydro-2-deoxygluconokinase.